Here is a 60-residue protein sequence, read N- to C-terminus: uncharacterized protein (60 aa).

This is an uncharacterized protein from Homo sapiens (Human).